The primary structure comprises 852 residues: Lon protease homolog 2, peroxisomal (852 aa).

Serine 2 is modified (N-acetylserine). The Lon N-terminal domain occupies 13–222 (LPLLLTHESV…MTIPLLVRQI (210 aa)). 375–382 (GPPGVGKT) serves as a coordination point for ATP. In terms of domain architecture, Lon proteolytic spans 651–837 (LSQPGVAIGL…DEVLNAAFDG (187 aa)). Active-site residues include serine 743 and lysine 786. The Microbody targeting signal motif lies at 850–852 (SKL).

Belongs to the peptidase S16 family. In terms of assembly, interacts with PEX5. Interacts with TYSND1. May interact with enzymes involved in beta-oxidation of fatty acids, including ACOX1/AOX.

Its subcellular location is the peroxisome matrix. The catalysed reaction is Hydrolysis of proteins in presence of ATP.. Its function is as follows. ATP-dependent serine protease that mediates the selective degradation of misfolded and unassembled polypeptides in the peroxisomal matrix. Necessary for type 2 peroxisome targeting signal (PTS2)-containing protein processing and facilitates peroxisome matrix protein import. May indirectly regulate peroxisomal fatty acid beta-oxidation through degradation of the self-processed forms of TYSND1. This Rattus norvegicus (Rat) protein is Lon protease homolog 2, peroxisomal (Lonp2).